A 172-amino-acid polypeptide reads, in one-letter code: C-phycocyanin beta chain (172 aa).

(2R,3E)-phycocyanobilin is bound by residues asparagine 35, aspartate 39, asparagine 72, arginine 77, cysteine 82, 82 to 88 (CLRDMEI), 149 to 151 (TTG), and cysteine 153. An N4-methylasparagine modification is found at asparagine 72.

Belongs to the phycobiliprotein family. In terms of assembly, heterodimer of an alpha and a beta subunit. Dimers further assemble into trimers and the trimers into hexamers. The basic functional unit of phycobiliproteins is a ring-shaped hexamer formed from two back-to-back trimers contacting via the alpha chain subunits. The trimers are composed of alpha/beta subunit heterodimers arranged around a three-fold axis of symmetry. The phycoerythrins also contain a gamma subunit which is located in the center of the hexamer. Post-translationally, contains two covalently linked phycocyanobilin chromophores.

It localises to the plastid. Its subcellular location is the chloroplast thylakoid membrane. Functionally, light-harvesting photosynthetic tetrapyrrole chromophore-protein from the phycobiliprotein complex (phycobilisome, PBS). Phycocyanin is the major phycobiliprotein in the PBS rod. This is C-phycocyanin beta chain (cpcB) from Galdieria sulphuraria (Red alga).